A 207-amino-acid chain; its full sequence is Cytochrome c biogenesis ATP-binding export protein CcmA (207 aa).

The region spanning 4-207 is the ABC transporter domain; sequence LEVRELLCER…RISLTQTRAV (204 aa). 36–43 contributes to the ATP binding site; that stretch reads GSNGAGKT.

Belongs to the ABC transporter superfamily. CcmA exporter (TC 3.A.1.107) family. As to quaternary structure, the complex is composed of two ATP-binding proteins (CcmA) and two transmembrane proteins (CcmB).

Its subcellular location is the cell inner membrane. The catalysed reaction is heme b(in) + ATP + H2O = heme b(out) + ADP + phosphate + H(+). Part of the ABC transporter complex CcmAB involved in the biogenesis of c-type cytochromes; once thought to export heme, this seems not to be the case, but its exact role is uncertain. Responsible for energy coupling to the transport system. The sequence is that of Cytochrome c biogenesis ATP-binding export protein CcmA from Shigella dysenteriae serotype 1 (strain Sd197).